The sequence spans 262 residues: Small ribosomal subunit protein eS1 (262 aa).

Residues H235–A253 are compositionally biased toward basic and acidic residues. A disordered region spans residues H235 to V262.

The protein belongs to the eukaryotic ribosomal protein eS1 family. Component of the small ribosomal subunit. Mature ribosomes consist of a small (40S) and a large (60S) subunit. The 40S subunit contains about 33 different proteins and 1 molecule of RNA (18S). The 60S subunit contains about 49 different proteins and 3 molecules of RNA (28S, 5.8S and 5S).

The protein resides in the cytoplasm. In Triatoma infestans (Assassin bug), this protein is Small ribosomal subunit protein eS1.